We begin with the raw amino-acid sequence, 450 residues long: 6-phospho-beta-glucosidase (450 aa).

5-73 serves as a coordination point for NAD(+); it reads LKVVTIGGGS…VPMKLYKTLD (69 aa). Residues Arg96 and Asn150 each coordinate substrate. The Mn(2+) site is built by Cys172 and His203. Tyr258 functions as the Proton acceptor in the catalytic mechanism.

As to quaternary structure, homotetramer. NAD(+) is required as a cofactor. It depends on Mn(2+) as a cofactor. Co(2+) serves as cofactor. Requires Ni(2+) as cofactor.

The catalysed reaction is 6-phospho-beta-D-glucosyl-(1-&gt;4)-D-glucose + H2O = D-glucose 6-phosphate + D-glucose. Its function is as follows. Hydrolyzes a wide variety of P-beta-glucosides including cellobiose-6P, salicin-6P, arbutin-6P, gentiobiose-6P, methyl-beta-glucoside-6P and p-nitrophenyl-beta-D-glucopyranoside-6P. Is also able to hydrolyze phospho-N,N'-diacetylchitobiose. This is 6-phospho-beta-glucosidase (chbF) from Escherichia coli (strain K12).